Consider the following 211-residue polypeptide: SAGA-associated factor 11 homolog 2 (211 aa).

Residues 115-136 (CTCPNCDRLVAAARFAPHLEKC) form an SGF11-type zinc finger. The tract at residues 149–211 (RRLATKEGSS…GSKKNNGKTF (63 aa)) is disordered. The segment covering 157 to 166 (SSASTSSTST) has biased composition (low complexity). Position 187 is a phosphoserine (Ser187). A compositionally biased stretch (low complexity) spans 197-211 (SSRNNGSKKNNGKTF).

This sequence belongs to the SGF11 family. As to quaternary structure, component of some SAGA transcription coactivator-HAT complexes, at least composed of Ada2b, not/nonstop, Pcaf/Gcn5, Sgf11 and Spt3. Within the SAGA complex, Sgf11, e(y)2, and not/nonstop form an additional subcomplex of SAGA called the DUB module (deubiquitination module). Interacts directly with not/nonstop. Interacts with the AMEX complex component xmas-2. Interacts with Cbp80; important for promoter recruitment of Sgf11 that is not associated with the DUB module.

Its subcellular location is the nucleus. The protein resides in the nucleoplasm. The protein localises to the cytoplasm. Component of the transcription regulatory histone acetylation (HAT) complex SAGA, a multiprotein complex that activates transcription by remodeling chromatin and mediating histone acetylation and deubiquitination. Within the SAGA complex, participates in a subcomplex that specifically deubiquitinates histone H2B. The SAGA complex is recruited to specific gene promoters by activators, where it is required for transcription. Required for nuclear receptor-mediated transactivation. Binds independently on SAGA to promoters in an RNA-dependent manner. Binds to mRNA and is essential for total mRNA export from the nucleus. Required to counteract heterochromatin silencing. Controls the development of neuronal connectivity in visual system by being required for accurate axon targeting in the optic lobe. Required for expression of ecdysone-induced genes such as br/broad. This Drosophila grimshawi (Hawaiian fruit fly) protein is SAGA-associated factor 11 homolog 2.